Consider the following 218-residue polypeptide: Monomethylamine corrinoid protein 1 (218 aa).

The B12-binding N-terminal domain occupies 1-91; sequence MANQEIFDKL…ELEKTKVEGE (91 aa). The region spanning 94–218 is the B12-binding domain; that stretch reads TGLAITFVAE…AAKVALNIMK (125 aa). Methylcob(III)alamin is bound at residue His107.

It belongs to the methylamine corrinoid protein family. In terms of assembly, can form a complex with MtmB.

It functions in the pathway one-carbon metabolism; methanogenesis from methylamine. Acts as a methyl group carrier between MtmB and MtbA. This chain is Monomethylamine corrinoid protein 1 (mtmC1), found in Methanosarcina acetivorans (strain ATCC 35395 / DSM 2834 / JCM 12185 / C2A).